Reading from the N-terminus, the 313-residue chain is MRNWSFSKAALTVSLLALSWSPFGPAEVQAYPIYAQENYAYPREATGRIVCANCHLAQKPVDIEVPQAVLPDTVFEATVKIPYDTEAKQVLGTGKKGPLNVGAVLILPEGFQIAPTDRIPEEMQTKVGKLYFQQYSPEHPNVIVVGPLPGKKYNEMVFPILAPNPATNKDVHFLKYPIYLGGNRGRGQVYPDGSKSNNNIFQAPVAGTITSITPGEKLTRVTLKTVAGTEVVESIPAGPDIIVSVGQTVKADQPLTNNPNVGGFGQAETEVVLQNPARVQGLIIFFAFVLIAQVFLVLKKKQFEKVQLSEMNF.

Residues 1-30 (MRNWSFSKAALTVSLLALSWSPFGPAEVQA) form the signal peptide. Residues tyrosine 31, cysteine 51, cysteine 54, and histidine 55 each contribute to the heme site. Residues 279 to 298 (VQGLIIFFAFVLIAQVFLVL) traverse the membrane as a helical segment.

This sequence belongs to the cytochrome f family. The 4 large subunits of the cytochrome b6-f complex are cytochrome b6, subunit IV (17 kDa polypeptide, petD), cytochrome f and the Rieske protein, while the 4 small subunits are PetG, PetL, PetM and PetN. The complex functions as a dimer. Heme is required as a cofactor.

It localises to the plastid. The protein localises to the chloroplast thylakoid membrane. Its function is as follows. Component of the cytochrome b6-f complex, which mediates electron transfer between photosystem II (PSII) and photosystem I (PSI), cyclic electron flow around PSI, and state transitions. The chain is Cytochrome f from Nephroselmis olivacea (Green alga).